A 513-amino-acid polypeptide reads, in one-letter code: Probable DNA primase large subunit (513 aa).

Cys-315, Cys-398, Cys-415, and Cys-457 together coordinate [4Fe-4S] cluster.

Belongs to the eukaryotic-type primase large subunit family. Heterodimer of a small subunit and a large subunit. [4Fe-4S] cluster is required as a cofactor.

Its function is as follows. DNA primase is the polymerase that synthesizes small RNA primers for the Okazaki fragments made during discontinuous DNA replication. The protein is Probable DNA primase large subunit of Neurospora crassa (strain ATCC 24698 / 74-OR23-1A / CBS 708.71 / DSM 1257 / FGSC 987).